We begin with the raw amino-acid sequence, 337 residues long: Tetraacyldisaccharide 4'-kinase (337 aa).

58–65 contributes to the ATP binding site; the sequence is TVGGSGKT.

This sequence belongs to the LpxK family.

The enzyme catalyses a lipid A disaccharide + ATP = a lipid IVA + ADP + H(+). It participates in glycolipid biosynthesis; lipid IV(A) biosynthesis; lipid IV(A) from (3R)-3-hydroxytetradecanoyl-[acyl-carrier-protein] and UDP-N-acetyl-alpha-D-glucosamine: step 6/6. Functionally, transfers the gamma-phosphate of ATP to the 4'-position of a tetraacyldisaccharide 1-phosphate intermediate (termed DS-1-P) to form tetraacyldisaccharide 1,4'-bis-phosphate (lipid IVA). The polypeptide is Tetraacyldisaccharide 4'-kinase (Shewanella putrefaciens (strain CN-32 / ATCC BAA-453)).